The sequence spans 604 residues: Netrin-1 (604 aa).

A signal peptide spans 1 to 24 (MMRAVWEALAALAAVACLVGAVRG). In terms of domain architecture, Laminin N-terminal spans 47 to 284 (HPRRCIPDFV…AVSDLQVGGR (238 aa)). N-linked (GlcNAc...) asparagine glycans are attached at residues Asn-95, Asn-116, and Asn-131. 15 disulfide bridges follow: Cys-119/Cys-152, Cys-285/Cys-294, Cys-287/Cys-304, Cys-306/Cys-315, Cys-318/Cys-338, Cys-341/Cys-350, Cys-343/Cys-368, Cys-371/Cys-380, Cys-383/Cys-401, Cys-404/Cys-416, Cys-406/Cys-423, Cys-425/Cys-434, Cys-437/Cys-451, Cys-472/Xaa-544, and Cys-491/Cys-601. Laminin EGF-like domains lie at 285–340 (CKCN…ECVA), 341–403 (CNCN…ACKA), and 404–453 (CDCH…PCIK). An N-linked (GlcNAc...) asparagine glycan is attached at Asn-417. The NTR domain occupies 472–601 (CDSYCKASKG…FQQREKKGKC (130 aa)). The short motif at 530–532 (RGD) is the Cell attachment site element.

Binds to its receptors; DCC, UNC5A, UNC5B, UNC5C and probably UNC5D. Binds to its receptor; DSCAM. Interacts with APP.

The protein resides in the secreted. It is found in the cytoplasm. Its function is as follows. Netrins control guidance of CNS commissural axons and peripheral motor axons. Its association with either DCC or some UNC5 receptors will lead to axon attraction or repulsion, respectively. Binding to UNC5C might cause dissociation of UNC5C from polymerized TUBB3 in microtubules and thereby lead to increased microtubule dynamics and axon repulsion. Involved in dorsal root ganglion axon projection towards the spinal cord. It also serves as a survival factor via its association with its receptors which prevent the initiation of apoptosis. Involved in colorectal tumorigenesis by regulating apoptosis. The sequence is that of Netrin-1 (Ntn1) from Rattus norvegicus (Rat).